We begin with the raw amino-acid sequence, 149 residues long: Calmodulin-1 (149 aa).

An N-acetylalanine modification is found at alanine 2. EF-hand domains lie at 8–43 (EQIA…LGQN), 44–79 (PTEA…KMKD), 81–116 (DSEE…LGEK), and 117–149 (LTDE…MLAK). The Ca(2+) site is built by aspartate 21, aspartate 23, aspartate 25, cysteine 27, glutamate 32, aspartate 57, aspartate 59, asparagine 61, threonine 63, glutamate 68, aspartate 94, aspartate 96, asparagine 98, and glutamate 105. The residue at position 116 (lysine 116) is an N6,N6,N6-trimethyllysine. 5 residues coordinate Ca(2+): aspartate 130, aspartate 132, aspartate 134, glutamine 136, and glutamate 141.

The protein belongs to the calmodulin family. As to expression, high expression in stolon tips and stems, moderate in roots, and very low in leaves. Localized in the meristematic regions of the shoot and root tips, the tip of the developing tuber and the vascular zones of petiole and tuber. Not detected in mesophyll cells.

Its function is as follows. Calmodulin mediates the control of a large number of enzymes, ion channels and other proteins by Ca(2+). Among the enzymes to be stimulated by the calmodulin-Ca(2+) complex are a number of protein kinases and phosphatases. The protein is Calmodulin-1 (PCM1) of Solanum tuberosum (Potato).